The primary structure comprises 93 residues: MISSNYSYPLDPSWNTEDITKVLRFLNQVEHAYENSIKVDDLLDSYKEFKKVVKSKAQEKQIDREFQRTSGYSTYQAVKAAQQQAKGFISLGR.

The protein belongs to the UPF0223 family.

This is UPF0223 protein SAG0995 from Streptococcus agalactiae serotype V (strain ATCC BAA-611 / 2603 V/R).